We begin with the raw amino-acid sequence, 1057 residues long: Protein transport protein Sec16B (1057 aa).

Positions 1 to 15 (MELWVPQTQGRTTGP) are enriched in polar residues. The disordered stretch occupies residues 1 to 86 (MELWVPQTQG…VSGADYLKGS (86 aa)). Residues 45-63 (QDTHKNSKPQQDPRDDHQQ) are compositionally biased toward basic and acidic residues. S70, S137, S161, and S185 each carry phosphoserine. Residues 185–220 (SAFGLEQPGEFFPESGAQKQKPSLTSKSNLLQQHES) form a disordered region. Residues 201–213 (AQKQKPSLTSKSN) are compositionally biased toward polar residues. A Phosphoserine modification is found at S245. The segment at 263 to 708 (APMRFYVPHV…KHKELEQTRT (446 aa)) is central conserved domain (CCD); required for localization to endoplasmic reticulum exit sites. A compositionally biased stretch (basic and acidic residues) spans 704 to 715 (EQTRTGDLRDPD). 2 disordered regions span residues 704–778 (EQTR…TYSE) and 849–1057 (AVIS…SQPC). Positions 737-764 (GQQNYSEDSEYSSALWPTSEQTSLTNPT) are enriched in polar residues. T856 carries the phosphothreonine modification. 4 positions are modified to phosphoserine: S866, S869, S872, and S881. The segment covering 883–903 (GADKPPHPDASQKEKLRDGKN) has biased composition (basic and acidic residues). Positions 906–926 (SSGFGWFSWFRSKPASSVSTS) are enriched in low complexity. A compositionally biased stretch (acidic residues) spans 927-938 (GDEDSVDSSDSE). Gly residues predominate over residues 990-999 (EGVGIGGFSG). Positions 1028–1043 (NPSQVPQLPTASSLNR) are enriched in polar residues.

Belongs to the SEC16 family. As to quaternary structure, SEC16A and SEC16B are each present in multiple copies in a heteromeric complex. Interacts with TFG. Interacts with SEC13. Liver, kidney, heart, spleen and brain.

Its subcellular location is the endoplasmic reticulum membrane. The protein localises to the golgi apparatus membrane. Functionally, plays a role in the organization of the endoplasmic reticulum exit sites (ERES), also known as transitional endoplasmic reticulum (tER). Required for secretory cargo traffic from the endoplasmic reticulum to the Golgi apparatus. Involved in peroxisome biogenesis. Regulates the transport of peroxisomal biogenesis factors PEX3 and PEX16 from the ER to peroxisomes. The polypeptide is Protein transport protein Sec16B (Sec16b) (Rattus norvegicus (Rat)).